Consider the following 276-residue polypeptide: Formamidopyrimidine-DNA glycosylase (276 aa).

The active-site Schiff-base intermediate with DNA is P2. The active-site Proton donor is the E3. K59 acts as the Proton donor; for beta-elimination activity in catalysis. Positions 92, 111, and 155 each coordinate DNA. The FPG-type zinc finger occupies 239–273 (AVYGQTGAPCPRCGTAIEKIKVGGRGTHFCPTCQQ). R263 serves as the catalytic Proton donor; for delta-elimination activity.

This sequence belongs to the FPG family. As to quaternary structure, monomer. It depends on Zn(2+) as a cofactor.

It carries out the reaction Hydrolysis of DNA containing ring-opened 7-methylguanine residues, releasing 2,6-diamino-4-hydroxy-5-(N-methyl)formamidopyrimidine.. The enzyme catalyses 2'-deoxyribonucleotide-(2'-deoxyribose 5'-phosphate)-2'-deoxyribonucleotide-DNA = a 3'-end 2'-deoxyribonucleotide-(2,3-dehydro-2,3-deoxyribose 5'-phosphate)-DNA + a 5'-end 5'-phospho-2'-deoxyribonucleoside-DNA + H(+). Involved in base excision repair of DNA damaged by oxidation or by mutagenic agents. Acts as a DNA glycosylase that recognizes and removes damaged bases. Has a preference for oxidized purines, such as 7,8-dihydro-8-oxoguanine (8-oxoG). Has AP (apurinic/apyrimidinic) lyase activity and introduces nicks in the DNA strand. Cleaves the DNA backbone by beta-delta elimination to generate a single-strand break at the site of the removed base with both 3'- and 5'-phosphates. This is Formamidopyrimidine-DNA glycosylase from Exiguobacterium sibiricum (strain DSM 17290 / CCUG 55495 / CIP 109462 / JCM 13490 / 255-15).